The sequence spans 615 residues: Isocitrate dehydrogenase kinase/phosphatase (615 aa).

ATP is bound by residues Ala328 to Leu334 and Lys349. Asp384 is a catalytic residue. Residues Ala595–Ala615 form a disordered region.

This sequence belongs to the AceK family.

It is found in the cytoplasm. It carries out the reaction L-seryl-[isocitrate dehydrogenase] + ATP = O-phospho-L-seryl-[isocitrate dehydrogenase] + ADP + H(+). Functionally, bifunctional enzyme which can phosphorylate or dephosphorylate isocitrate dehydrogenase (IDH) on a specific serine residue. This is a regulatory mechanism which enables bacteria to bypass the Krebs cycle via the glyoxylate shunt in response to the source of carbon. When bacteria are grown on glucose, IDH is fully active and unphosphorylated, but when grown on acetate or ethanol, the activity of IDH declines drastically concomitant with its phosphorylation. The sequence is that of Isocitrate dehydrogenase kinase/phosphatase from Cupriavidus taiwanensis (strain DSM 17343 / BCRC 17206 / CCUG 44338 / CIP 107171 / LMG 19424 / R1) (Ralstonia taiwanensis (strain LMG 19424)).